The chain runs to 273 residues: Undecaprenyl-diphosphatase (273 aa).

8 helical membrane-spanning segments follow: residues 4 to 24 (MELWKAIILGMVEGLTEFAPV), 48 to 68 (AANTFKVVIQLGSILAAVVVF), 89 to 109 (LNLIHVIIGLLPAGVLGVLFE), 116 to 136 (LFSTKTVLIGLVLGALLMIAA), 152 to 172 (ITYKQAFFVGLMQCLSLWPGF), 193 to 213 (ADFTFIMAVPIMAGASGLSLL), 222 to 242 (ADIPFFIAGFFSAFVFALLAI), and 252 to 272 (IRLVPFAVYRIVLAVVIYFLY).

This sequence belongs to the UppP family.

Its subcellular location is the cell membrane. The catalysed reaction is di-trans,octa-cis-undecaprenyl diphosphate + H2O = di-trans,octa-cis-undecaprenyl phosphate + phosphate + H(+). Catalyzes the dephosphorylation of undecaprenyl diphosphate (UPP). Confers resistance to bacitracin. This is Undecaprenyl-diphosphatase from Geobacillus kaustophilus (strain HTA426).